The sequence spans 187 residues: Threonylcarbamoyl-AMP synthase (187 aa).

One can recognise a YrdC-like domain in the interval 4-187 (TLTLSEAVTA…DARSGHILRL (184 aa)).

This sequence belongs to the SUA5 family. TsaC subfamily.

It is found in the cytoplasm. The catalysed reaction is L-threonine + hydrogencarbonate + ATP = L-threonylcarbamoyladenylate + diphosphate + H2O. In terms of biological role, required for the formation of a threonylcarbamoyl group on adenosine at position 37 (t(6)A37) in tRNAs that read codons beginning with adenine. Catalyzes the conversion of L-threonine, HCO(3)(-)/CO(2) and ATP to give threonylcarbamoyl-AMP (TC-AMP) as the acyladenylate intermediate, with the release of diphosphate. The protein is Threonylcarbamoyl-AMP synthase of Xylella fastidiosa (strain 9a5c).